We begin with the raw amino-acid sequence, 175 residues long: Disulfide bond formation protein B (175 aa).

The Cytoplasmic portion of the chain corresponds to 1–13 (MTALTRFAHSRSS). Residues 14-30 (WFLLTGTAIGLEAAALY) form a helical membrane-spanning segment. The Periplasmic segment spans residues 31-48 (FQYVMKLDPCVMCIYQRL). A disulfide bridge links cysteine 40 with cysteine 43. The chain crosses the membrane as a helical span at residues 49-64 (AVFGILVAGLIGMTAP). At 65-71 (KYRLIRI) the chain is on the cytoplasmic side. A helical membrane pass occupies residues 72 to 89 (LGASCWAVSATWGLKLAL). Residues 90-144 (ALVNMQNNPSPFATCSFLPEFPTWMPLHEWFPAVMLPTGMCTDLPWRFMDVTMAE) are Periplasmic-facing. Cysteine 104 and cysteine 130 are disulfide-bonded. Residues 145–163 (WMVVVFSTFLVIWLLFIVP) form a helical membrane-spanning segment. Residues 164–175 (ILSGSTKPSLYK) lie on the Cytoplasmic side of the membrane.

The protein belongs to the DsbB family.

The protein resides in the cell inner membrane. Its function is as follows. Required for disulfide bond formation in some periplasmic proteins. Acts by oxidizing the DsbA protein. This Shewanella sp. (strain W3-18-1) protein is Disulfide bond formation protein B.